Reading from the N-terminus, the 245-residue chain is Fibroblast growth factor 13 (245 aa).

The interval 1–36 (MAAAIASSLIRQKRQAREREKSNACKCVSSPSKGKT) is disordered. The interval 1 to 62 (MAAAIASSLI…GSKKRRRRRP (62 aa)) is mediates targeting to the nucleus. The interval 67-201 (KGIVTKLYSR…AHFLPKPLKV (135 aa)) is mediates interaction with sodium channels. Residue S208 is modified to Phosphoserine. The interval 213-245 (TEFSRSGSGTPTKSRSVSGVLNGGKSMSHNEST) is disordered. Polar residues predominate over residues 215–245 (FSRSGSGTPTKSRSVSGVLNGGKSMSHNEST).

This sequence belongs to the heparin-binding growth factors family. As to quaternary structure, interacts with SCN8A; regulates SCN8A activity. Interacts with SCN1A; may regulate SCN1A activity. Interacts with SCN5A; the interaction is direct and may regulate SNC5A density at membranes and function. May also interact with SCN2A and SCN11A. Interacts with MAPK8IP2; may regulate the MAPK8IP2 scaffolding activity. May be phosphorylated. In terms of tissue distribution, ubiquitously expressed. Predominantly expressed in the nervous system.

Its subcellular location is the nucleus. It is found in the cytoplasm. The protein localises to the cell projection. The protein resides in the filopodium. It localises to the growth cone. Its subcellular location is the dendrite. It is found in the cell membrane. The protein localises to the sarcolemma. Functionally, microtubule-binding protein which directly binds tubulin and is involved in both polymerization and stabilization of microtubules. Through its action on microtubules, may participate in the refinement of axons by negatively regulating axonal and leading processes branching. Plays a crucial role in neuron polarization and migration in the cerebral cortex and the hippocampus. Regulates voltage-gated sodium channel transport and function. May also play a role in MAPK signaling. Required for the development of axonal initial segment-targeting inhibitory GABAergic synapses made by chandelier neurons. The chain is Fibroblast growth factor 13 from Homo sapiens (Human).